The sequence spans 1247 residues: Nitric oxide synthase (1247 aa).

The segment at 13 to 33 (EVAEGRESSKANHIGEERRGY) is disordered. (6R)-L-erythro-5,6,7,8-tetrahydrobiopterin is bound at residue S146. C224 is a binding site for heme b. L-arginine contacts are provided by Q287, W396, Y397, E401, and N406. Positions 487 and 500 each coordinate (6R)-L-erythro-5,6,7,8-tetrahydrobiopterin. Y515 lines the heme b pocket. A calmodulin-binding region spans residues 537-557 (PRRKFNFKQIARAVKFTSKLF). A Flavodoxin-like domain is found at 567-766 (ATVLYATETG…AFRKWAPEVF (200 aa)). Residue 712 to 743 (VFALGSSAYPNFCAFGKYIDNILGELGGERLM) participates in FMN binding. In terms of domain architecture, FAD-binding FR-type spans 795-1065 (NTVRYAPVAE…VRSAPSFHMS (271 aa)). FAD is bound by residues 855 to 866 (YEPGDHVGIFPA) and 998 to 1008 (LQPRFYSISSS). Residues 1073-1091 (ILIG…WQEW) and 1170-1185 (KGHI…AEHV) each bind NADP(+).

The protein belongs to the NOS family. Requires heme b as cofactor. It depends on FAD as a cofactor. The cofactor is FMN.

The enzyme catalyses 2 L-arginine + 3 NADPH + 4 O2 + H(+) = 2 L-citrulline + 2 nitric oxide + 3 NADP(+) + 4 H2O. Its activity is regulated as follows. Stimulated by calcium/calmodulin. In terms of biological role, produces nitric oxide (NO) which is a messenger molecule with diverse functions throughout the body. Nitric oxide limits plasmodium development in the midgut. This is Nitric oxide synthase from Anopheles stephensi (Indo-Pakistan malaria mosquito).